Consider the following 301-residue polypeptide: MKEILYRRSIQDTVRIKGIGLHSGKEVNLTAHPAPSGTGIVFEYRKGLEKASISAELSNVVDTSNATTLGDGIHKIQTVEHLLAAVYALGLTDLILEIDAVEVPIMDGSSLPFLQALESAGIIEYPEIVEPIYIQSPLWVVDGDKYLVLLPSDELKVTYTIDFNHPLLKGQSITVSLDREKIKQEILPARTFGFLKDVEALQARGLAMGGSLDNAIVLTQDGYLNQQLRFENECVRHKILDLFGDISIAGRPIIGHYLASKAGHALDISMAKLVMSNVTGDEISKYKSRRIPLFKRKAVVV.

The Zn(2+) site is built by histidine 81, histidine 237, and aspartate 241. The active-site Proton donor is the histidine 264.

This sequence belongs to the LpxC family. The cofactor is Zn(2+).

It carries out the reaction a UDP-3-O-[(3R)-3-hydroxyacyl]-N-acetyl-alpha-D-glucosamine + H2O = a UDP-3-O-[(3R)-3-hydroxyacyl]-alpha-D-glucosamine + acetate. It functions in the pathway glycolipid biosynthesis; lipid IV(A) biosynthesis; lipid IV(A) from (3R)-3-hydroxytetradecanoyl-[acyl-carrier-protein] and UDP-N-acetyl-alpha-D-glucosamine: step 2/6. Its function is as follows. Catalyzes the hydrolysis of UDP-3-O-myristoyl-N-acetylglucosamine to form UDP-3-O-myristoylglucosamine and acetate, the committed step in lipid A biosynthesis. The sequence is that of UDP-3-O-acyl-N-acetylglucosamine deacetylase from Leptospira interrogans serogroup Icterohaemorrhagiae serovar copenhageni (strain Fiocruz L1-130).